A 168-amino-acid polypeptide reads, in one-letter code: Putative postmeiotic segregation increased 2-like protein 3 (168 aa).

The KRAB domain occupies 8–84 (VSFKDVAVDF…EGEFPCQHSP (77 aa)).

Belongs to the DNA mismatch repair MutL/HexB family.

This Homo sapiens (Human) protein is Putative postmeiotic segregation increased 2-like protein 3 (PMS2P3).